Consider the following 439-residue polypeptide: GTPase Der (439 aa).

2 EngA-type G domains span residues 4 to 166 (PIVA…PAQD) and 175 to 350 (IRIA…EEAS). GTP is bound by residues 10-17 (GRPNVGKS), 57-61 (DTGGL), 119-122 (NKVE), 181-188 (GRPNVGKS), 228-232 (DTAGM), and 293-296 (NKWD). The KH-like domain occupies 351–435 (KRVATADLNN…PIRFFLRKRE (85 aa)).

It belongs to the TRAFAC class TrmE-Era-EngA-EngB-Septin-like GTPase superfamily. EngA (Der) GTPase family. Associates with the 50S ribosomal subunit.

In terms of biological role, GTPase that plays an essential role in the late steps of ribosome biogenesis. This chain is GTPase Der, found in Desulforamulus reducens (strain ATCC BAA-1160 / DSM 100696 / MI-1) (Desulfotomaculum reducens).